Reading from the N-terminus, the 151-residue chain is Superoxide dismutase [Cu-Zn] 2 (151 aa).

Cu cation is bound by residues His-44, His-46, and His-61. A disulfide bridge links Cys-55 with Cys-144. Zn(2+)-binding residues include His-61, His-69, His-78, and Asp-81. His-118 is a binding site for Cu cation.

This sequence belongs to the Cu-Zn superoxide dismutase family. As to quaternary structure, homodimer. Cu cation is required as a cofactor. Zn(2+) serves as cofactor.

It is found in the cytoplasm. The catalysed reaction is 2 superoxide + 2 H(+) = H2O2 + O2. Functionally, destroys radicals which are normally produced within the cells and which are toxic to biological systems. The polypeptide is Superoxide dismutase [Cu-Zn] 2 (SODCC.1) (Zea mays (Maize)).